We begin with the raw amino-acid sequence, 464 residues long: Putative guanine nucleotide-binding protein subunit alpha (464 aa).

The 383-residue stretch at 33-415 (HSKLKRGDGP…ETKRDKYNEK (383 aa)) folds into the G-alpha domain. Residues 36-49 (LKRGDGPGESGKST) are G1 motif. Residues 41 to 48 (GPGESGKS), 147 to 151 (DVGGQ), 214 to 220 (LRSRTKT), 239 to 243 (DVGGQ), 268 to 271 (RNRD), and 310 to 313 (TSQS) each bind GTP. A Mg(2+)-binding site is contributed by S48. A G2 motif region spans residues 212-220 (DVLRSRTKT). Position 220 (T220) interacts with Mg(2+). A G3 motif region spans residues 235-244 (FRMVDVGGQR). The segment at 306-313 (VMFLTSQS) is G4 motif. The G5 motif stretch occupies residues 382–387 (GYSGTC).

The protein in the N-terminal section; belongs to the G-alpha family. It in the C-terminal section; belongs to the class-II aminoacyl-tRNA synthetase family. G proteins are composed of 3 units; alpha, beta and gamma. The alpha chain contains the guanine nucleotide binding site.

Its function is as follows. Guanine nucleotide-binding proteins (G proteins) are involved as modulators or transducers in various transmembrane signaling systems. This chain is Putative guanine nucleotide-binding protein subunit alpha, found in Leishmania donovani.